The primary structure comprises 2959 residues: uncharacterized protein (2959 aa).

The protein resides in the virion. This is an uncharacterized protein from Acanthamoeba polyphaga mimivirus (APMV).